Reading from the N-terminus, the 320-residue chain is Lipoyl synthase (320 aa).

Residues C67, C72, C78, C93, C97, C100, and S307 each contribute to the [4Fe-4S] cluster site. Residues 79–296 form the Radical SAM core domain; sequence FNHGTATFMI…RDKAQAMGFE (218 aa).

The protein belongs to the radical SAM superfamily. Lipoyl synthase family. The cofactor is [4Fe-4S] cluster.

Its subcellular location is the cytoplasm. The catalysed reaction is [[Fe-S] cluster scaffold protein carrying a second [4Fe-4S](2+) cluster] + N(6)-octanoyl-L-lysyl-[protein] + 2 oxidized [2Fe-2S]-[ferredoxin] + 2 S-adenosyl-L-methionine + 4 H(+) = [[Fe-S] cluster scaffold protein] + N(6)-[(R)-dihydrolipoyl]-L-lysyl-[protein] + 4 Fe(3+) + 2 hydrogen sulfide + 2 5'-deoxyadenosine + 2 L-methionine + 2 reduced [2Fe-2S]-[ferredoxin]. The protein operates within protein modification; protein lipoylation via endogenous pathway; protein N(6)-(lipoyl)lysine from octanoyl-[acyl-carrier-protein]: step 2/2. Its function is as follows. Catalyzes the radical-mediated insertion of two sulfur atoms into the C-6 and C-8 positions of the octanoyl moiety bound to the lipoyl domains of lipoate-dependent enzymes, thereby converting the octanoylated domains into lipoylated derivatives. The chain is Lipoyl synthase from Pasteurella multocida (strain Pm70).